The chain runs to 2207 residues: Desmoplakin-B (2207 aa).

Coiled-coil stretches lie at residues methionine 506 to lysine 916, alanine 952 to arginine 1000, and threonine 1029 to asparagine 1063. The segment covering lysine 905–leucine 924 has biased composition (basic and acidic residues). A disordered region spans residues lysine 905–glutamate 933. 9 Plectin repeats span residues leucine 1369 to glutamine 1406, leucine 1407 to leucine 1445, leucine 1446 to leucine 1483, tyrosine 1571 to leucine 1609, leucine 1610 to leucine 1647, leucine 1685 to leucine 1723, isoleucine 1783 to leucine 1811, leucine 1992 to arginine 2029, and phenylalanine 2068 to leucine 2106. Polar residues predominate over residues isoleucine 2155 to proline 2164. The tract at residues isoleucine 2155–serine 2207 is disordered. The segment covering glycine 2165–serine 2207 has biased composition (low complexity).

Belongs to the plakin or cytolinker family.

It localises to the cell junction. It is found in the desmosome. The protein localises to the cell membrane. In terms of biological role, involved in the organization of desmosome cell-cell junctions. Of particular importance in cell adhesion in the skin and during cardiac development. May also play a role in the regulation of Wnt, TGF-beta and Hippo signaling pathways. The sequence is that of Desmoplakin-B from Danio rerio (Zebrafish).